We begin with the raw amino-acid sequence, 317 residues long: Ribosomal protein L11 methyltransferase (317 aa).

S-adenosyl-L-methionine is bound by residues threonine 158, glycine 179, aspartate 201, and asparagine 244.

It belongs to the methyltransferase superfamily. PrmA family.

It is found in the cytoplasm. The enzyme catalyses L-lysyl-[protein] + 3 S-adenosyl-L-methionine = N(6),N(6),N(6)-trimethyl-L-lysyl-[protein] + 3 S-adenosyl-L-homocysteine + 3 H(+). Functionally, methylates ribosomal protein L11. The protein is Ribosomal protein L11 methyltransferase of Streptococcus pyogenes serotype M3 (strain ATCC BAA-595 / MGAS315).